Reading from the N-terminus, the 475-residue chain is Fez family zinc finger protein 1 (475 aa).

Positions 28–43 (PLAFSIERIMARTPEP) match the Engrailed homology 1 repressor motif. C2H2-type zinc fingers lie at residues 260 to 282 (FTCE…MPVH), 288 to 310 (FVCK…KIIH), 316 to 338 (HKCN…TRIH), 344 to 366 (FVCE…KLTH), 372 to 394 (FKCN…MHTH), and 400 to 423 (FTCP…RKLH). The segment at 428–475 (GLARTPAGEPGTEPPPPLPQQPPMTLPPLQPPLPTPGPLQPGLHQGHQ) is disordered. The segment covering 439–466 (TEPPPPLPQQPPMTLPPLQPPLPTPGPL) has biased composition (pro residues).

Belongs to the krueppel C2H2-type zinc-finger protein family. As to expression, expressed in brain. Little or no expression in other tissues. Overexpressed specifically in gastric cancers. A 2- to 20-fold increase is found in over 50% of gastric cancer tissues.

The protein localises to the nucleus. In terms of biological role, transcription repressor. Involved in the axonal projection and proper termination of olfactory sensory neurons (OSN). Plays a role in rostro-caudal patterning of the diencephalon and in prethalamic formation. Expression is required in OSN to cell-autonomously regulate OSN axon projections. Regulates non-cell-autonomously the layer formation of the olfactory bulb development and the interneurons. May be required for correct rostral migration of the interneuron progenitors. This chain is Fez family zinc finger protein 1 (FEZF1), found in Homo sapiens (Human).